The chain runs to 357 residues: Protein pelota homolog (357 aa).

Belongs to the eukaryotic release factor 1 family. Pelota subfamily. As to quaternary structure, monomer. A divalent metal cation serves as cofactor.

It is found in the cytoplasm. In terms of biological role, may function in recognizing stalled ribosomes, interact with stem-loop structures in stalled mRNA molecules, and effect endonucleolytic cleavage of the mRNA. May play a role in the release non-functional ribosomes and degradation of damaged mRNAs. Has endoribonuclease activity. The chain is Protein pelota homolog from Halobacterium salinarum (strain ATCC 29341 / DSM 671 / R1).